The following is a 230-amino-acid chain: 7-cyano-7-deazaguanine synthase (230 aa).

16 to 26 (LSGGLDSMVSG) serves as a coordination point for ATP. Zn(2+)-binding residues include Cys195, Cys205, Cys208, and Cys211.

This sequence belongs to the QueC family. Requires Zn(2+) as cofactor.

It carries out the reaction 7-carboxy-7-deazaguanine + NH4(+) + ATP = 7-cyano-7-deazaguanine + ADP + phosphate + H2O + H(+). It participates in purine metabolism; 7-cyano-7-deazaguanine biosynthesis. Its function is as follows. Catalyzes the ATP-dependent conversion of 7-carboxy-7-deazaguanine (CDG) to 7-cyano-7-deazaguanine (preQ(0)). The polypeptide is 7-cyano-7-deazaguanine synthase (Rhizorhabdus wittichii (strain DSM 6014 / CCUG 31198 / JCM 15750 / NBRC 105917 / EY 4224 / RW1) (Sphingomonas wittichii)).